A 1421-amino-acid polypeptide reads, in one-letter code: Envelopment polyprotein (1421 aa).

Positions M1–G20 are cleaved as a signal peptide. The Lumenal segment spans residues E21–C479. The segment covering S22–A31 has biased composition (low complexity). The interval S22–P42 is disordered. N-linked (GlcNAc...) asparagine; by host glycans are attached at residues N97 and N346. A helical membrane pass occupies residues L480 to V500. At Y501–S610 the chain is on the cytoplasmic side. Residues W611 to T631 traverse the membrane as a helical segment. The Lumenal segment spans residues T632–E643. An N-linked (GlcNAc...) asparagine; by host glycan is attached at N639. Residues C644–L664 form a helical membrane-spanning segment. Residues K665–R708 lie on the Cytoplasmic side of the membrane. The chain crosses the membrane as a helical span at residues V709–A729. The propeptide occupies A722–L776. The Lumenal segment spans residues Q730–S1330. 2 disulfide bridges follow: C901–C1096 and C929–C934. N-linked (GlcNAc...) asparagine; by host glycans are attached at residues N1081 and N1299. Residues I1331–Y1351 traverse the membrane as a helical segment. The Cytoplasmic portion of the chain corresponds to G1352–V1421.

Belongs to the nairovirus envelope glycoprotein family. As to quaternary structure, heterodimer with glycoprotein C; in prefusion state. In terms of assembly, heterodimer with glycoprotein N; in prefusion state. Homotrimeric; in postfusion state. Specific enzymatic cleavage by host MBTPS1/S1P/SKI-1 endopeptidase yield glycoprotein N. Specific enzymatic cleavages by host furin-like protease and MBTPS1/S1P endopeptidase yield GP38. In terms of processing, glycosylated.

The protein localises to the host endoplasmic reticulum membrane. It is found in the virion membrane. It localises to the host Golgi apparatus membrane. In terms of biological role, glycoprotein N and glycoprotein C interact with each other and are present at the surface of the virion. Glycoprotein N probably locks the Gn-Gc complex in a prefusion state. Glycoprotein N and glycoprotein C are able to attach the virion to host cell receptors. This attachment induces virion internalization predominantly through clathrin-dependent endocytosis. Its function is as follows. Glycoprotein C and glycoprotein N interact with each other and are present at the surface of the virion. The spikes at the surface of the virion are formed by an N-terminal extension of glycoprotein C. Glycoprotein N and glycoprotein C are able to attach the virion to host cell receptors. This attachment induces virion internalization predominantly through clathrin-dependent endocytosis. Class II fusion protein that promotes fusion of viral membrane with host endosomal membrane after endocytosis of the virion. Exposure to potassium is necessary for the conformational change leading to fusion. The sequence is that of Envelopment polyprotein (GP) from Ixodes.